A 37-amino-acid polypeptide reads, in one-letter code: MRVQPSVKKICRNCKIIRRHGIVRVICTDPRHKQKQG.

This sequence belongs to the bacterial ribosomal protein bL36 family.

In Laribacter hongkongensis (strain HLHK9), this protein is Large ribosomal subunit protein bL36.